A 122-amino-acid chain; its full sequence is Large ribosomal subunit protein uL14 (122 aa).

The protein belongs to the universal ribosomal protein uL14 family. As to quaternary structure, part of the 50S ribosomal subunit. Forms a cluster with proteins L3 and L19. In the 70S ribosome, L14 and L19 interact and together make contacts with the 16S rRNA in bridges B5 and B8.

Binds to 23S rRNA. Forms part of two intersubunit bridges in the 70S ribosome. The polypeptide is Large ribosomal subunit protein uL14 (Psychrobacter arcticus (strain DSM 17307 / VKM B-2377 / 273-4)).